Reading from the N-terminus, the 376-residue chain is Carbamoyl phosphate synthase small chain (376 aa).

The nucleophile stretch occupies residues 1–181; sequence MSKAVLVLED…VEPDGPPGVS (181 aa). The segment at 1–183 is CPSase; it reads MSKAVLVLED…PDGPPGVSRF (183 aa). 8 residues coordinate L-glutamine: serine 46, glycine 232, glycine 234, phenylalanine 261, glutamine 264, asparagine 302, glycine 304, and phenylalanine 305. The 193-residue stretch at 184 to 376 folds into the Glutamine amidotransferase type-1 domain; that stretch reads TVAALDLGIK…FVELMAGEGR (193 aa). Active-site residues include histidine 350 and glutamate 352.

This sequence belongs to the CarA family. Composed of two chains; the small (or glutamine) chain promotes the hydrolysis of glutamine to ammonia, which is used by the large (or ammonia) chain to synthesize carbamoyl phosphate. Tetramer of heterodimers (alpha,beta)4.

The catalysed reaction is hydrogencarbonate + L-glutamine + 2 ATP + H2O = carbamoyl phosphate + L-glutamate + 2 ADP + phosphate + 2 H(+). The enzyme catalyses L-glutamine + H2O = L-glutamate + NH4(+). Its pathway is amino-acid biosynthesis; L-arginine biosynthesis; carbamoyl phosphate from bicarbonate: step 1/1. It functions in the pathway pyrimidine metabolism; UMP biosynthesis via de novo pathway; (S)-dihydroorotate from bicarbonate: step 1/3. Functionally, small subunit of the glutamine-dependent carbamoyl phosphate synthetase (CPSase). CPSase catalyzes the formation of carbamoyl phosphate from the ammonia moiety of glutamine, carbonate, and phosphate donated by ATP, constituting the first step of 2 biosynthetic pathways, one leading to arginine and/or urea and the other to pyrimidine nucleotides. The small subunit (glutamine amidotransferase) binds and cleaves glutamine to supply the large subunit with the substrate ammonia. The polypeptide is Carbamoyl phosphate synthase small chain (Mycobacterium tuberculosis (strain CDC 1551 / Oshkosh)).